The chain runs to 226 residues: Uracil-DNA glycosylase (226 aa).

The active-site Proton acceptor is the D64.

This sequence belongs to the uracil-DNA glycosylase (UDG) superfamily. UNG family.

It localises to the cytoplasm. The catalysed reaction is Hydrolyzes single-stranded DNA or mismatched double-stranded DNA and polynucleotides, releasing free uracil.. In terms of biological role, excises uracil residues from the DNA which can arise as a result of misincorporation of dUMP residues by DNA polymerase or due to deamination of cytosine. In Photorhabdus laumondii subsp. laumondii (strain DSM 15139 / CIP 105565 / TT01) (Photorhabdus luminescens subsp. laumondii), this protein is Uracil-DNA glycosylase.